We begin with the raw amino-acid sequence, 454 residues long: Phosphoglucosamine mutase (454 aa).

The active-site Phosphoserine intermediate is the Ser-102. Mg(2+)-binding residues include Ser-102, Asp-247, Asp-249, and Asp-251. Residue Ser-102 is modified to Phosphoserine.

This sequence belongs to the phosphohexose mutase family. Mg(2+) serves as cofactor. Activated by phosphorylation.

It carries out the reaction alpha-D-glucosamine 1-phosphate = D-glucosamine 6-phosphate. Its function is as follows. Catalyzes the conversion of glucosamine-6-phosphate to glucosamine-1-phosphate. The chain is Phosphoglucosamine mutase from Kineococcus radiotolerans (strain ATCC BAA-149 / DSM 14245 / SRS30216).